A 97-amino-acid polypeptide reads, in one-letter code: M-zodatoxin-Lt7a (97 aa).

An N-terminal signal peptide occupies residues Met1 to Ser22. The propeptide occupies Val23 to Arg63. The Processing quadruplet motif signature appears at Glu60 to Arg63.

Cleavage of the propeptide depends on the processing quadruplet motif (XXXR, with at least one of X being E). Expressed by the venom gland.

The protein resides in the secreted. Does not have antimicrobial or antifungal activity. Does not have hemolytic activity against rabbit erythrocytes. However, it causes some conductance changes in planar bilayer membranes, without membrane rupture, suggesting a cytolytic function on other biological targets. It causes paralysis, but is not lethal when injected into insect (M.domestica) larvae. The polypeptide is M-zodatoxin-Lt7a (Lachesana tarabaevi (Spider)).